We begin with the raw amino-acid sequence, 431 residues long: Chaperone SurA (431 aa).

A signal peptide spans 1 to 20 (MKNWRTLILGLALSASTAFA). 2 PpiC domains span residues 171–272 (NDEL…KVND) and 282–382 (VTET…QLLD).

It localises to the periplasm. The catalysed reaction is [protein]-peptidylproline (omega=180) = [protein]-peptidylproline (omega=0). Chaperone involved in the correct folding and assembly of outer membrane proteins. Recognizes specific patterns of aromatic residues and the orientation of their side chains, which are found more frequently in integral outer membrane proteins. May act in both early periplasmic and late outer membrane-associated steps of protein maturation. This is Chaperone SurA from Pectobacterium atrosepticum (strain SCRI 1043 / ATCC BAA-672) (Erwinia carotovora subsp. atroseptica).